The following is a 316-amino-acid chain: Transcription initiation factor IIB (316 aa).

The segment at 11–42 (PKVTCPNHPDALLVEDYRAGDMICSECGLVVG) adopts a TFIIB-type zinc-finger fold. Zn(2+)-binding residues include Cys15, His18, Cys34, and Cys37. 2 consecutive repeat copies span residues 124 to 200 (MSDR…LILK) and 218 to 294 (FCSN…LIYP).

This sequence belongs to the TFIIB family.

Its subcellular location is the nucleus. The protein resides in the chromosome. It catalyses the reaction L-lysyl-[protein] + acetyl-CoA = N(6)-acetyl-L-lysyl-[protein] + CoA + H(+). Functionally, general transcription factor that plays a role in transcription initiation by RNA polymerase II (Pol II). Involved in the pre-initiation complex (PIC) formation and Pol II recruitment at promoter DNA. Together with the TATA box-bound TBP forms the core initiation complex and provides a bridge between TBP and the Pol II-TFIIF complex. Released from the PIC early following the onset of transcription during the initiation and elongation transition and reassociates with TBP during the next transcription cycle. Associates with chromatin to core promoter-specific regions. Binds to two distinct DNA core promoter consensus sequence elements in a TBP-independent manner; these IIB-recognition elements (BREs) are localized immediately upstream (BREu), 5'-[GC][GC][GA]CGCC-3', and downstream (BREd), 5'-[GA]T[TGA][TG][GT][TG][TG]-3', of the TATA box element. Modulates transcription start site selection. Also exhibits autoacetyltransferase activity that contributes to the activated transcription. The sequence is that of Transcription initiation factor IIB from Xenopus laevis (African clawed frog).